Consider the following 326-residue polypeptide: Pyruvate dehydrogenase E1 component subunit beta (326 aa).

Glu62 lines the thiamine diphosphate pocket.

In terms of assembly, heterodimer of an alpha and a beta chain. It depends on thiamine diphosphate as a cofactor.

It catalyses the reaction N(6)-[(R)-lipoyl]-L-lysyl-[protein] + pyruvate + H(+) = N(6)-[(R)-S(8)-acetyldihydrolipoyl]-L-lysyl-[protein] + CO2. The pyruvate dehydrogenase complex catalyzes the overall conversion of pyruvate to acetyl-CoA and CO(2). It contains multiple copies of three enzymatic components: pyruvate dehydrogenase (E1), dihydrolipoamide acetyltransferase (E2) and lipoamide dehydrogenase (E3). The protein is Pyruvate dehydrogenase E1 component subunit beta (pdhB) of Mycoplasma genitalium (strain ATCC 33530 / DSM 19775 / NCTC 10195 / G37) (Mycoplasmoides genitalium).